A 632-amino-acid chain; its full sequence is Chaperone protein DnaK (632 aa).

Thr-198 carries the post-translational modification Phosphothreonine; by autocatalysis.

Belongs to the heat shock protein 70 family.

In terms of biological role, acts as a chaperone. This Rhodopseudomonas palustris (strain BisB18) protein is Chaperone protein DnaK.